Here is a 599-residue protein sequence, read N- to C-terminus: Elongation factor 4 (599 aa).

Residues Ser5 to Glu187 enclose the tr-type G domain. GTP is bound by residues Asp17–Thr22 and Asn134–Asp137.

The protein belongs to the TRAFAC class translation factor GTPase superfamily. Classic translation factor GTPase family. LepA subfamily.

Its subcellular location is the cell inner membrane. It carries out the reaction GTP + H2O = GDP + phosphate + H(+). Its function is as follows. Required for accurate and efficient protein synthesis under certain stress conditions. May act as a fidelity factor of the translation reaction, by catalyzing a one-codon backward translocation of tRNAs on improperly translocated ribosomes. Back-translocation proceeds from a post-translocation (POST) complex to a pre-translocation (PRE) complex, thus giving elongation factor G a second chance to translocate the tRNAs correctly. Binds to ribosomes in a GTP-dependent manner. This Pseudomonas putida (strain ATCC 47054 / DSM 6125 / CFBP 8728 / NCIMB 11950 / KT2440) protein is Elongation factor 4.